A 260-amino-acid polypeptide reads, in one-letter code: Acetylglutamate kinase (260 aa).

Residues 46-47, Arg-68, and Asn-160 each bind substrate; that span reads GG.

This sequence belongs to the acetylglutamate kinase family. ArgB subfamily.

The protein resides in the cytoplasm. It carries out the reaction N-acetyl-L-glutamate + ATP = N-acetyl-L-glutamyl 5-phosphate + ADP. It functions in the pathway amino-acid biosynthesis; L-arginine biosynthesis; N(2)-acetyl-L-ornithine from L-glutamate: step 2/4. In terms of biological role, catalyzes the ATP-dependent phosphorylation of N-acetyl-L-glutamate. This Shewanella denitrificans (strain OS217 / ATCC BAA-1090 / DSM 15013) protein is Acetylglutamate kinase.